We begin with the raw amino-acid sequence, 101 residues long: Replication restart protein PriB (101 aa).

The SSB domain maps to 1 to 101 (MTTNNLVLAG…LHAENVELKT (101 aa)).

It belongs to the PriB family. In terms of assembly, homodimer. Interacts with PriA and DnaT. Component of the replication restart primosome. Primosome assembly occurs via a 'hand-off' mechanism. PriA binds to replication forks, subsequently PriB then DnaT bind; DnaT then displaces ssDNA to generate the helicase loading substrate.

Its function is as follows. Involved in the restart of stalled replication forks, which reloads the replicative helicase on sites other than the origin of replication; the PriA-PriB pathway is the major replication restart pathway. During primosome assembly it facilitates complex formation between PriA and DnaT on DNA; stabilizes PriA on DNA. Stimulates the DNA unwinding activity of PriA helicase. This is Replication restart protein PriB from Shewanella pealeana (strain ATCC 700345 / ANG-SQ1).